A 709-amino-acid polypeptide reads, in one-letter code: Elongation factor G (709 aa).

Residues 8–290 (NRYRNIGISA…AVIQYMPAPQ (283 aa)) enclose the tr-type G domain. Residues 17-24 (AHIDAGKT), 88-92 (DTPGH), and 142-145 (NKMD) each bind GTP.

The protein belongs to the TRAFAC class translation factor GTPase superfamily. Classic translation factor GTPase family. EF-G/EF-2 subfamily.

It localises to the cytoplasm. Functionally, catalyzes the GTP-dependent ribosomal translocation step during translation elongation. During this step, the ribosome changes from the pre-translocational (PRE) to the post-translocational (POST) state as the newly formed A-site-bound peptidyl-tRNA and P-site-bound deacylated tRNA move to the P and E sites, respectively. Catalyzes the coordinated movement of the two tRNA molecules, the mRNA and conformational changes in the ribosome. The sequence is that of Elongation factor G from Psychrobacter sp. (strain PRwf-1).